The following is a 657-amino-acid chain: Forkhead box protein O3 (657 aa).

2 disordered regions span residues 1-71 and 216-320; these read MAEA…EGAA and SSWW…ELDD. Residues 142-236 constitute a DNA-binding region (fork-head); the sequence is WGNMSYADLI…KGGKAPRRRA (95 aa). Positions 246–257 are enriched in basic residues; it reads TKSRGRAAKKKA. Residues 268–283 show a composition bias toward polar residues; the sequence is DSPSQLSKWPGSPTSR. Basic and acidic residues predominate over residues 284 to 296; the sequence is SSDKLDTWTDFRS. Positions 297 to 307 are enriched in polar residues; the sequence is RTNSNASTISG.

Dephosphorylation may promote translocation to the nucleus where the protein induces transcription of target genes and triggers apoptosis. Localized to the animal hemisphere during early cleavage stages. At the late neurula, localized in the anterior neural plate, neural crest cells and in the hatching gland. As development progresses, expression becomes less localized, being observed in a variety of organs and tissues including the head, branchial arches and somites by stage 32.

The protein resides in the cytoplasm. It localises to the cytosol. Its subcellular location is the nucleus. Functionally, transcriptional activator that recognizes and binds to the DNA sequence 5'-[AG]TAAA[TC]A-3' and regulates different processes, such as apoptosis and autophagy. Acts as a positive regulator of autophagy in skeletal muscle: in starved cells, enters the nucleus following dephosphorylation and binds the promoters of autophagy genes, thereby activating their expression, resulting in proteolysis of skeletal muscle proteins. Triggers apoptosis in the absence of survival factors, including neuronal cell death upon oxidative stress. In response to metabolic stress, translocates into the mitochondria where it promotes mtDNA transcription. Also acts as a key regulator of chondrogenic commitment of skeletal progenitor cells in response to lipid availability: when lipids levels are low, translocates to the nucleus and promotes expression of sox9, which induces chondrogenic commitment and suppresses fatty acid oxidation. Also acts as a key regulator of regulatory T-cells (Treg) differentiation. This is Forkhead box protein O3 from Xenopus laevis (African clawed frog).